A 157-amino-acid polypeptide reads, in one-letter code: 2-C-methyl-D-erythritol 2,4-cyclodiphosphate synthase (157 aa).

The a divalent metal cation site is built by aspartate 8 and histidine 10. 4-CDP-2-C-methyl-D-erythritol 2-phosphate contacts are provided by residues 8-10 and 34-35; these read DVH and HS. Residue histidine 42 coordinates a divalent metal cation. Residues 56 to 58, 61 to 65, 132 to 135, phenylalanine 139, and arginine 142 each bind 4-CDP-2-C-methyl-D-erythritol 2-phosphate; these read DIG, FPDTD, and TTTE.

The protein belongs to the IspF family. In terms of assembly, homotrimer. A divalent metal cation is required as a cofactor.

The enzyme catalyses 4-CDP-2-C-methyl-D-erythritol 2-phosphate = 2-C-methyl-D-erythritol 2,4-cyclic diphosphate + CMP. The protein operates within isoprenoid biosynthesis; isopentenyl diphosphate biosynthesis via DXP pathway; isopentenyl diphosphate from 1-deoxy-D-xylulose 5-phosphate: step 4/6. In terms of biological role, involved in the biosynthesis of isopentenyl diphosphate (IPP) and dimethylallyl diphosphate (DMAPP), two major building blocks of isoprenoid compounds. Catalyzes the conversion of 4-diphosphocytidyl-2-C-methyl-D-erythritol 2-phosphate (CDP-ME2P) to 2-C-methyl-D-erythritol 2,4-cyclodiphosphate (ME-CPP) with a corresponding release of cytidine 5-monophosphate (CMP). This chain is 2-C-methyl-D-erythritol 2,4-cyclodiphosphate synthase, found in Pseudomonas putida (strain W619).